The primary structure comprises 82 residues: ATP synthase subunit c (82 aa).

The next 2 helical transmembrane spans lie at 3 to 23 (PLVA…ASLG) and 57 to 77 (LAFM…LLFA).

It belongs to the ATPase C chain family. As to quaternary structure, F-type ATPases have 2 components, F(1) - the catalytic core - and F(0) - the membrane proton channel. F(1) has five subunits: alpha(3), beta(3), gamma(1), delta(1), epsilon(1). F(0) has four main subunits: a(1), b(1), b'(1) and c(10-14). The alpha and beta chains form an alternating ring which encloses part of the gamma chain. F(1) is attached to F(0) by a central stalk formed by the gamma and epsilon chains, while a peripheral stalk is formed by the delta, b and b' chains.

It is found in the cellular thylakoid membrane. F(1)F(0) ATP synthase produces ATP from ADP in the presence of a proton or sodium gradient. F-type ATPases consist of two structural domains, F(1) containing the extramembraneous catalytic core and F(0) containing the membrane proton channel, linked together by a central stalk and a peripheral stalk. During catalysis, ATP synthesis in the catalytic domain of F(1) is coupled via a rotary mechanism of the central stalk subunits to proton translocation. Functionally, key component of the F(0) channel; it plays a direct role in translocation across the membrane. A homomeric c-ring of between 10-14 subunits forms the central stalk rotor element with the F(1) delta and epsilon subunits. The protein is ATP synthase subunit c of Synechococcus sp. (strain PCC 6716).